The primary structure comprises 47 residues: Putative beta-neurotoxin (47 aa).

The region spanning 1–47 (KEGYMGSDGCKMSCVINDQFCDTECQAKLKGSTGYCYFXGLACYXXG) is the LCN-type CS-alpha/beta domain. Disulfide bonds link Cys-14-Cys-36 and Cys-21-Cys-43.

As to expression, expressed by the venom gland.

The protein localises to the secreted. In terms of biological role, causes transient paralysis of the rear legs of and spasms in insects (A.domestica). This Rhopalurus junceus (Caribbean blue scorpion) protein is Putative beta-neurotoxin.